We begin with the raw amino-acid sequence, 283 residues long: Acetylglutamate kinase (283 aa).

Substrate is bound by residues 63–64 (GG), Arg-85, and Asn-178.

Belongs to the acetylglutamate kinase family. ArgB subfamily.

It is found in the cytoplasm. The enzyme catalyses N-acetyl-L-glutamate + ATP = N-acetyl-L-glutamyl 5-phosphate + ADP. The protein operates within amino-acid biosynthesis; L-arginine biosynthesis; N(2)-acetyl-L-ornithine from L-glutamate: step 2/4. In terms of biological role, catalyzes the ATP-dependent phosphorylation of N-acetyl-L-glutamate. The protein is Acetylglutamate kinase of Prochlorococcus marinus (strain MIT 9215).